A 393-amino-acid chain; its full sequence is Cholinephosphotransferase 1 (393 aa).

At 1 to 40 (MGFFIPQSSLGNLKLYKYQSDDRSFLSNHVLRPFWRKFAT) the chain is on the lumenal side. A helical transmembrane segment spans residues 41 to 61 (IFPLWMAPNLVTLLGFCFIIF). Residues 62–172 (NVLTTLYYDP…YHTHKLYLAE (111 aa)) are Cytoplasmic-facing. A helical membrane pass occupies residues 173 to 193 (FCGPVEGIIVLCISFIAVGIY). Residues 194-210 (GPQTIWHTKVAQFSWQD) are Lumenal-facing. Residues 211 to 231 (FVFDVETVHLMYAFCTGALIF) traverse the membrane as a helical segment. The Cytoplasmic portion of the chain corresponds to 232–263 (NIVTAHTNVVRYYESQSTKSATPSKTAENISK). The chain crosses the membrane as a helical span at residues 264–284 (AVNGLLPFFAYFSSIFTLVLI). Position 285 (Gln285) is a topological domain, lumenal. Residues 286-306 (PSFISLALILSIGFSVAFVVG) form a helical membrane-spanning segment. Topologically, residues 307 to 320 (RMIIAHLTMQPFPM) are cytoplasmic. A helical membrane pass occupies residues 321-341 (VNFPFLIPTIQLVLYAFMVYV). Over 342–348 (LDYQKGS) the chain is Lumenal. Residues 349 to 369 (IVSALVWMGLGLTLAIHGMFI) form a helical membrane-spanning segment. The Cytoplasmic segment spans residues 370-393 (NDIIYDITTFLDIYALSIKHPKEI).

It belongs to the CDP-alcohol phosphatidyltransferase class-I family. Mg(2+) is required as a cofactor.

Its subcellular location is the microsome membrane. It is found in the endoplasmic reticulum membrane. It localises to the mitochondrion outer membrane. It carries out the reaction CDP-choline + a 1,2-diacyl-sn-glycerol = a 1,2-diacyl-sn-glycero-3-phosphocholine + CMP + H(+). The catalysed reaction is CDP-N,N-dimethylethanolamine + a 1,2-diacyl-sn-glycerol = a 1,2-diacyl-sn-glycero-3-phospho-N,N-dimethylethanolamine + CMP + H(+). It functions in the pathway phospholipid metabolism; phosphatidylcholine biosynthesis; phosphatidylcholine from phosphocholine: step 2/2. Requires a divalent cation activator, and is inhibited by CMP. Activated by phospholipids, especially phosphatidylcholine. In terms of biological role, catalyzes the final step in the CDP-choline route leading to phosphatidylcholin (PC). Preferentially uses CDP-monomethylethanolamine as aminoalcohol substrate. Shows highest activity toward di- and mono-unsaturated diacylglycerol species as lipid substrates. The CDP-choline pathway only contributes to net PC synthesis if exogenous choline is present. In its absence, this pathway recycles choline from PC turnover and may contribute to maintaining the proper PC species composition. The protein is Cholinephosphotransferase 1 (CPT1) of Saccharomyces cerevisiae (strain ATCC 204508 / S288c) (Baker's yeast).